A 550-amino-acid chain; its full sequence is Hydroxylamine reductase (550 aa).

[2Fe-2S] cluster-binding residues include cysteine 3, cysteine 6, cysteine 18, and cysteine 25. Histidine 249, glutamate 273, cysteine 317, cysteine 405, cysteine 433, cysteine 458, glutamate 492, and lysine 494 together coordinate hybrid [4Fe-2O-2S] cluster. Cysteine 405 carries the cysteine persulfide modification.

It belongs to the HCP family. The cofactor is [2Fe-2S] cluster. It depends on hybrid [4Fe-2O-2S] cluster as a cofactor.

The protein resides in the cytoplasm. It catalyses the reaction A + NH4(+) + H2O = hydroxylamine + AH2 + H(+). Catalyzes the reduction of hydroxylamine to form NH(3) and H(2)O. This is Hydroxylamine reductase from Escherichia coli O6:H1 (strain CFT073 / ATCC 700928 / UPEC).